A 500-amino-acid polypeptide reads, in one-letter code: Probable cation transporter HKT1;4 (500 aa).

Residues 1–12 (MPTSRRALAGGA) are Cytoplasmic-facing. 2 consecutive transmembrane segments (helical) span residues 13-33 (LSMHVAYFLAISCLGYGLLGV) and 74-94 (LVVLTVLMLLGGEVFVSLVGL). Topologically, residues 95–156 (ASKWSKLRSD…ADTLRHNAVR (62 aa)) are cytoplasmic. The disordered stretch occupies residues 121–145 (ADIDGGDVENPTSSGEEAASRRRPM). 2 consecutive transmembrane segments (helical) span residues 157-177 (ALFYIVLAIFAVVHVVGAVAV) and 239-259 (VLAGNTLFAPLLAACVWAAAA). At 260–290 (ATRREELVEMAREGGRAAAAGYAHLMPARRC) the chain is on the cytoplasmic side. A run of 2 helical transmembrane segments spans residues 291–311 (WMLAATVAAFVAVLMALVCGM) and 346–366 (LSILAPAILVLFVLMMYLPPY). Topologically, residues 367-390 (TTWFPFEENSTTKDSNAENQGIRL) are cytoplasmic. 2 helical membrane passes run 391–411 (LESTLLSQLSYLTIFVIAICI) and 464–484 (GFVGRWSDSGKLILIFVMFFG). Residues 485–500 (RLKKFSMKGGKAWKLS) are Cytoplasmic-facing.

Belongs to the TrkH potassium transport family. HKT (TC 2.A.38.3) subfamily.

The protein localises to the membrane. In terms of biological role, probable cation transporter. May be involved in regulation of potassium-sodium homeostasis. This is Probable cation transporter HKT1;4 from Oryza sativa subsp. japonica (Rice).